Consider the following 570-residue polypeptide: Proline--tRNA ligase (570 aa).

It belongs to the class-II aminoacyl-tRNA synthetase family. ProS type 1 subfamily. Homodimer.

It localises to the cytoplasm. The enzyme catalyses tRNA(Pro) + L-proline + ATP = L-prolyl-tRNA(Pro) + AMP + diphosphate. Functionally, catalyzes the attachment of proline to tRNA(Pro) in a two-step reaction: proline is first activated by ATP to form Pro-AMP and then transferred to the acceptor end of tRNA(Pro). As ProRS can inadvertently accommodate and process non-cognate amino acids such as alanine and cysteine, to avoid such errors it has two additional distinct editing activities against alanine. One activity is designated as 'pretransfer' editing and involves the tRNA(Pro)-independent hydrolysis of activated Ala-AMP. The other activity is designated 'posttransfer' editing and involves deacylation of mischarged Ala-tRNA(Pro). The misacylated Cys-tRNA(Pro) is not edited by ProRS. This Thermoanaerobacter pseudethanolicus (strain ATCC 33223 / 39E) (Clostridium thermohydrosulfuricum) protein is Proline--tRNA ligase.